Reading from the N-terminus, the 258-residue chain is MKKFNILIALLFFTSLVISPLNVKANENIDSVKEKELHKKSELSSTALNNMKHSYADKNPIIGENKSTGDQFLENTLLYKKFFTDLINFEDLLINFNSKEMAQHFKSKNVDVYPIRYSINCYGGEIDRTACTYGGVTPHEGNKLKERKKIPINLWINGVQKEVSLDKVQTDKKNVTVQELDAQARRYLQKDLKLYNNDTLGGKIQRGKIEFDSSDGSKVSYDLFDVKGDFPEKQLRIYSDNKTLSTEHLHIDIYLYEK.

The N-terminal stretch at 1–25 (MKKFNILIALLFFTSLVISPLNVKA) is a signal peptide. Zn(2+) contacts are provided by Asp-212, His-248, His-250, and Asp-252.

Belongs to the staphylococcal/streptococcal toxin family. In terms of assembly, homodimer; zinc-dependent. Interacts with MHC class II molecules composed of alpha/HLA-DRA and beta/HLA-DRB1 chains. Zn(2+) is required as a cofactor.

The protein resides in the secreted. Staphylococcal enterotoxin that activates the host immune system by binding as unprocessed molecules to major histocompatibility (MHC) complex class II and T-cell receptor (TCR) molecules. In turn, this ternary complex activates a large number of T-lymphocytes initiating a systemic release of pro-inflammatory cytokines. In addition, induces B-cell proliferation and differentiation in the presence of T-cells. Causes also the intoxication staphylococcal food poisoning syndrome. The polypeptide is Enterotoxin type D (entD) (Staphylococcus aureus).